We begin with the raw amino-acid sequence, 415 residues long: MSVKRSVSEIEIESVQDQPSVAVGSFFKGFRAPSDTTFDLYKKKKSEKDEFVLHGENERLEYEGYTDSSSQASNQYVVGLFNPEKKSIQLYKAPVLVSKVVSKSSKNLRGPKIKSKSDTRPSALRNALGEAFGTKKAKKAIADLERNRIDSDKLTDSAIDIVDSVRTASKDLPTRAQLDEITSNDRPTPLANIDATDVEQIYPIESIIPKKELQFIRVSSILKEADKEKKLELFPYQNNSKYVAKKLDSLTQPSQMTKLQLLYYLSLLLGVYENRRVNNKTKLLERLNSPPEILVDGILSRFTVIKPGQFGRSKDRSYFIDPQNEDKILCYILAIIMHLDNFIVEITPLAHELNLKPSKVVSLFRVLGAIVKGATVAQAEAFGIPKSTAASYKIATMKVPFKLPEMTRRGRGPRR.

2 positions are modified to phosphoserine: Ser-34 and Ser-151. Residues 322 to 415 are interaction with DNA; it reads PQNEDKILCY…MTRRGRGPRR (94 aa).

This sequence belongs to the eukaryotic RPA49/POLR1E RNA polymerase subunit family. In terms of assembly, component of the RNA polymerase I (Pol I) complex consisting of 14 subunits: RPA135, RPA190, RPC40, RPA14, RPB5, RPO26, RPA43, RPB8, RPA12, RPB10, RPC19, RPC10, RPA49 and RPA34. The complex is composed of a horseshoe-shaped core containing ten subunits (RPA135, RPA190, RPB5, RPO26, RPB8, RPB10, RPC10, RPA12, RPC19 and RPC40) where RPA135 and RPA190 form the DNA-binding cleft. Outside of the core, RPA14 and RPA43 form the stalk that mediates interactions with transcription initiation factors and newly synthesized RNA. Forms a TFIIF-like heterodimer with RPA34; the heterodimer formed by RPA34 and RPA49 can be dissociated from the Pol I core giving rise to a 12 subunit form A* of Pol I (formerly called pol A) that shows impaired transcript elongation activity and increased sensitivity to alpha-amanitin. The heterodimer formed by RPA34 and RPA49 stabilizes subunit RPA12 and stimulates RPA12-dependent RNA cleavage.

The protein localises to the nucleus. Its subcellular location is the nucleolus. In terms of biological role, DNA-dependent RNA polymerases catalyze the transcription of DNA into RNA using the four ribonucleoside triphosphates as substrates. Component of RNA polymerase I (Pol I) which synthesizes ribosomal RNA precursors. Besides, RNA polymerase I has intrinsic RNA cleavage activity. The heterodimer formed by RPA34 and RPA49 stimulates transcript elongation by Pol I. Subunit RPA49 can bind both single-stranded and double-stranded DNA. This is DNA-directed RNA polymerase I subunit RPA49 (RPA49) from Saccharomyces cerevisiae (strain ATCC 204508 / S288c) (Baker's yeast).